The following is a 178-amino-acid chain: Transcription factor E (178 aa).

The 85-residue stretch at 4-88 folds into the HTH TFE/IIEalpha-type domain; the sequence is AEDLFINLAK…YWKPNIDQIN (85 aa).

It belongs to the TFE family. As to quaternary structure, monomer. Interaction with RNA polymerase subunits RpoF and RpoE is necessary for Tfe stimulatory transcription activity. Able to interact with Tbp and RNA polymerase in the absence of DNA promoter. Interacts both with the preinitiation and elongation complexes.

Transcription factor that plays a role in the activation of archaeal genes transcribed by RNA polymerase. Facilitates transcription initiation by enhancing TATA-box recognition by TATA-box-binding protein (Tbp), and transcription factor B (Tfb) and RNA polymerase recruitment. Not absolutely required for transcription in vitro, but particularly important in cases where Tbp or Tfb function is not optimal. It dynamically alters the nucleic acid-binding properties of RNA polymerases by stabilizing the initiation complex and destabilizing elongation complexes. Seems to translocate with the RNA polymerase following initiation and acts by binding to the non template strand of the transcription bubble in elongation complexes. The polypeptide is Transcription factor E (Saccharolobus islandicus (strain L.S.2.15 / Lassen #1) (Sulfolobus islandicus)).